The sequence spans 494 residues: Cheilanthifoline synthase (494 aa).

A helical transmembrane segment spans residues 4 to 24 (TIWLIISTVIIVLGIAKFLLG). Residue Cys-437 coordinates heme.

The protein belongs to the cytochrome P450 family. Requires heme as cofactor. As to expression, expressed in roots and at lower levels in stems, leaves and plantlets.

It is found in the endoplasmic reticulum membrane. It catalyses the reaction (S)-scoulerine + reduced [NADPH--hemoprotein reductase] + O2 = (S)-cheilanthifoline + oxidized [NADPH--hemoprotein reductase] + 2 H2O + H(+). Its function is as follows. Methylenedioxy bridge-forming cytochrome P450 involved in the biosynthesis of isoquinoline alkaloids. Converts (S)-scoulerine into (S)-cheilanthifoline, a precursor of sanguinarine. Catalyzes an oxidative reaction that does not incorporate oxygen into the product. This chain is Cheilanthifoline synthase, found in Argemone mexicana (Mexican prickly poppy).